A 384-amino-acid chain; its full sequence is MAGAEWKSLEECLEKHLPLPDLQEVKRVLYGKELRKLDLPREAFEAASREDFELQGYAFEAAEEQLRRPRIVHVGLVQNRIPLPANAPVAEQVSALHRRIKAIVEVAAMCGVNIICFQEAWTMPFAFCTREKLPWTEFAESAEDGPTTRFCQKLAKNHDMVVVSPILERDSEHGDVLWNTAVVISNSGAVLGKTRKNHIPRVGDFNESTYYMEGNLGHPVFQTQFGRIAVNICYGRHHPLNWLMYSINGAEIIFNPSATIGALSESLWPIEARNAAIANHCFTCAINRVGTEHFPNEFTSGDGKKAHQDFGYFYGSSYVAAPDSSRTPGLSRSRDGLLVAKLDLNLCQQVNDVWNFKMTGRYEMYARELAEAVKSNYSPTIVKE.

Residues 72–344 (VHVGLVQNRI…DGLLVAKLDL (273 aa)) enclose the CN hydrolase domain. The active-site Proton acceptor is Glu-119. Lys-196 functions as the Proton donor in the catalytic mechanism. Cys-233 (nucleophile) is an active-site residue. At Ser-378 the chain carries Phosphoserine.

It belongs to the carbon-nitrogen hydrolase superfamily. BUP family. Homodimer, homotetramer, homooctamer; can also form higher homooligomers. As to expression, detected in liver (at protein level).

The protein resides in the cytoplasm. It carries out the reaction 3-(carbamoylamino)propanoate + H2O + 2 H(+) = beta-alanine + NH4(+) + CO2. It catalyses the reaction 3-(carbamoylamino)-2-methylpropanoate + H2O + 2 H(+) = (R)-3-amino-2-methylpropanoate + NH4(+) + CO2. It participates in amino-acid biosynthesis; beta-alanine biosynthesis. Strongly inhibited by 50 mM Zn(2+). Not inhibited by EDTA. Competitively inhibited by beta-alanine, 5-aminolevulinic acid (ALA), beta-aminoisobutyrate and 4-ureidobutyrate. Catalyzes a late step in pyrimidine degradation. Converts N-carbamoyl-beta-alanine (3-ureidopropanoate) into beta-alanine, ammonia and carbon dioxide. Likewise, converts N-carbamoyl-beta-aminoisobutyrate (3-ureidoisobutyrate) into beta-aminoisobutyrate, ammonia and carbon dioxide. In Homo sapiens (Human), this protein is Beta-ureidopropionase (UPB1).